Reading from the N-terminus, the 113-residue chain is Death-associated protein-like 1.S (113 aa).

A disordered region spans residues Met-1 to Pro-53.

Belongs to the DAP-DAPL1 family. In terms of assembly, associates with ribosomes; preventing translation. Interacts with eiF5a (eif5a and eif5a2); preventing translation.

Functionally, ribosome-binding protein that promotes ribosome hibernation, a process during which ribosomes are stabilized in an inactive state and preserved from proteasomal degradation. Acts via its association with eiF5a (eif5a and eif5a2) at the polypeptide exit tunnel of the ribosome, preventing mRNA translation. Plays a key role in ribosome hibernation in the mature egg by preventing mRNA translation, leading to ribosome inactivation. Ribosomes, which are produced in large quantities during oogenesis, are stored and translationally repressed in the egg and early embryo. In Xenopus laevis (African clawed frog), this protein is Death-associated protein-like 1.S (dapl1.S).